Reading from the N-terminus, the 564-residue chain is MALLAAATLNPTTHLSLRSRAGRNSENLWLRSAASSQKSKGRFCNLTVRAGTPSKPAEPIGPVFTKLKPWQIPKRDWFDKDFLFGASTSAYQIEGAWNEDGKGPSTWDHFCHKYPERISDGTNGDVAADSYHLYEEDVKALKDMGMKVYRFSISWSRILPNGTGEVNQAGIDYYNKLINSLISHDIVPYVTIWHWDTPQALEDKYGGFLDPQIVDDYKQFAKLCFESFGDRVKNWFTFNEPHTYCCFSYGEGIHAPGRCSPGMDCAVPEGDSLREPYTAGHHILLAHAEAVEMFRTHYNMHGDSKIGMAFDVMGYEPYQDSFLDDQARERSIDYNLGWFLEPVVRGDYPFSMRSLIGDRLPVFTKEEQEKLASSCDIMGLNYYTSRFSKHVDISPDVTPKLNTDDAYASSETTGSDGNDIGPITGTYWIYMYPKGLTDLLLIMKEKYGNPPIFITENGIADVDGDETMPDPLDDWKRLDYLQRHISAVKDAIDQGADVRGHFTWGLIDNFEWGSGYSSRFGLVYIDKNDGFKRKLKKSAKWFSKFNAVPKHLLGTTKPTGQAPV.

A chloroplast-targeting transit peptide spans 1 to 50 (MALLAAATLNPTTHLSLRSRAGRNSENLWLRSAASSQKSKGRFCNLTVRA). A beta-D-glucoside is bound by residues Gln92, His194, and 239 to 240 (NE). Glu240 (proton donor) is an active-site residue. A disulfide bridge links Cys259 with Cys265. A beta-D-glucoside contacts are provided by residues Tyr383, Glu456, Trp504, 511-512 (EW), and Phe520. Glu456 functions as the Nucleophile in the catalytic mechanism.

This sequence belongs to the glycosyl hydrolase 1 family. In terms of assembly, homo- and heterohexamers. As to expression, expressed in young seedlings early after germination.

It is found in the plastid. It localises to the chloroplast. The enzyme catalyses Hydrolysis of terminal, non-reducing beta-D-glucosyl residues with release of beta-D-glucose.. It catalyses the reaction DIMBOA beta-D-glucoside + H2O = DIMBOA + D-glucose. It carries out the reaction DIBOA beta-D-glucoside + H2O = DIBOA + D-glucose. Functionally, acts in defense of young plant parts against pests via the production of hydroxamic acids from hydroxamic acid glucosides. Enzymatic activity is highly correlated with plant growth. The preferred substrate is DIMBOA-beta-D-glucoside. The polypeptide is 4-hydroxy-7-methoxy-3-oxo-3,4-dihydro-2H-1,4-benzoxazin-2-yl glucoside beta-D-glucosidase 1d, chloroplastic (GLU1D) (Triticum aestivum (Wheat)).